The following is a 295-amino-acid chain: Bifunctional protein FolD (295 aa).

NADP(+) contacts are provided by residues 166-168 (GRS), S195, and I236.

Belongs to the tetrahydrofolate dehydrogenase/cyclohydrolase family. In terms of assembly, homodimer.

It catalyses the reaction (6R)-5,10-methylene-5,6,7,8-tetrahydrofolate + NADP(+) = (6R)-5,10-methenyltetrahydrofolate + NADPH. It carries out the reaction (6R)-5,10-methenyltetrahydrofolate + H2O = (6R)-10-formyltetrahydrofolate + H(+). The protein operates within one-carbon metabolism; tetrahydrofolate interconversion. Its function is as follows. Catalyzes the oxidation of 5,10-methylenetetrahydrofolate to 5,10-methenyltetrahydrofolate and then the hydrolysis of 5,10-methenyltetrahydrofolate to 10-formyltetrahydrofolate. The chain is Bifunctional protein FolD from Chlorobium luteolum (strain DSM 273 / BCRC 81028 / 2530) (Pelodictyon luteolum).